Here is a 383-residue protein sequence, read N- to C-terminus: Chaperone protein DnaJ (383 aa).

In terms of domain architecture, J spans 4–68; the sequence is DLYETLNVSR…DQRARYDRFG (65 aa). A CR-type zinc finger spans residues 139–221; that stretch reads GGEKEITINH…CSGRGRNQKQ (83 aa). Zn(2+) is bound by residues cysteine 152, cysteine 155, cysteine 169, cysteine 172, cysteine 195, cysteine 198, cysteine 209, and cysteine 212. 4 CXXCXGXG motif repeats span residues 152–159, 169–176, 195–202, and 209–216; these read CETCRGSG, CRNCGGQG, CPNCQGTG, and CPTCSGRG.

It belongs to the DnaJ family. In terms of assembly, homodimer. It depends on Zn(2+) as a cofactor.

The protein resides in the cytoplasm. Functionally, participates actively in the response to hyperosmotic and heat shock by preventing the aggregation of stress-denatured proteins and by disaggregating proteins, also in an autonomous, DnaK-independent fashion. Unfolded proteins bind initially to DnaJ; upon interaction with the DnaJ-bound protein, DnaK hydrolyzes its bound ATP, resulting in the formation of a stable complex. GrpE releases ADP from DnaK; ATP binding to DnaK triggers the release of the substrate protein, thus completing the reaction cycle. Several rounds of ATP-dependent interactions between DnaJ, DnaK and GrpE are required for fully efficient folding. Also involved, together with DnaK and GrpE, in the DNA replication of plasmids through activation of initiation proteins. The sequence is that of Chaperone protein DnaJ from Gloeobacter violaceus (strain ATCC 29082 / PCC 7421).